We begin with the raw amino-acid sequence, 160 residues long: Putative flagellin YvzB (160 aa).

This sequence belongs to the bacterial flagellin family. As to quaternary structure, interacts with FliW.

It is found in the bacterial flagellum. This Bacillus subtilis (strain 168) protein is Putative flagellin YvzB (yvzB).